A 331-amino-acid polypeptide reads, in one-letter code: MAVRKPPITTREYWAPGHAACAGCGCATALRLATKALSEAMEEKYGDPNAFAIAHATGCMEVVSAVFPYTAWKAPWIHVAFENAAAVASGIEAAWKKLGRKGKILAIGGDGGTADIGLQALSGMLERWHNVLYLMYDNEAYMNTGIQRSSSTPYGAWTTTSPPGKYSVGEDKPKKWVALIAAAHQIPYVATASIGNPLDFVRKIKKAGKIDGPAFVQVLCTCPTGWRSPLEKGVEIARLAIETGIWPLFEIENGDIWNIKIQPPGGGAKVYKEGNRVVRIEFKKPIEEYLKLQGRFKHLFKRPEAIEELRNQVKAMWKVLGVEAILPRPEE.

[4Fe-4S] cluster is bound by residues C21, C24, C59, and C222.

Heterotetramer of one alpha, one beta, one delta and one gamma chain. Requires [4Fe-4S] cluster as cofactor.

It carries out the reaction 2 oxidized [2Fe-2S]-[ferredoxin] + pyruvate + CoA = 2 reduced [2Fe-2S]-[ferredoxin] + acetyl-CoA + CO2 + H(+). This chain is Pyruvate synthase subunit PorB (porB), found in Pyrococcus furiosus (strain ATCC 43587 / DSM 3638 / JCM 8422 / Vc1).